A 296-amino-acid polypeptide reads, in one-letter code: Isoprenyl transferase (296 aa).

A compositionally biased stretch (basic residues) spans Met1–Gly11. Positions Met1 to Lys29 are disordered. The active site involves Asp76. Asp76 is a binding site for Mg(2+). Substrate contacts are provided by residues Gly77–Arg80, Trp81, Arg89, His93, and Ser121–Glu123. Asn124 acts as the Proton acceptor in catalysis. Substrate-binding positions include Trp125, Arg127, Arg244, and Arg250 to Ser252. Position 263 (Glu263) interacts with Mg(2+).

Belongs to the UPP synthase family. As to quaternary structure, homodimer. It depends on Mg(2+) as a cofactor.

In terms of biological role, catalyzes the condensation of isopentenyl diphosphate (IPP) with allylic pyrophosphates generating different type of terpenoids. The chain is Isoprenyl transferase from Mycolicibacterium parafortuitum (Mycobacterium parafortuitum).